The following is a 767-amino-acid chain: MSKRRKLPARQPACLETFSPDVLNDVSELFAKSFSYRKPLDNEWQLPAPTESFSCGHLEFRALLDLKNSLNEVKNLLSDKKLDEWHRHTAFTNKAGKIISHVKKAVNAELCTQAWCKFQEILCSFPLIPQEAFQSGRLNSLHLCEAPGAFIASLNHYLKSHRFPCEWSWVANSLNPYHEANDNLRMITDDRLMANTLHCWYFGPDNTGDIMTLKYLTGLQDFLSGMSPIHLVTADGSFDCQGNPGEQEALVSSLHYCEAVTALITLGDGGSFVLKMFTLFEHCSVNLMYLLNCSFDQVHVFKPATSKAGNSEVYVVCLRYKGREAVQPLLSRMVLNFGTEMTRKALFPHHVIPKSFLERHEECCTFFHRYQLETISENIRLFESMGTGEQERLNNLRDCAVQYFMQKFQLKPLSRNHWLVKKSNIGCSMNTKWFGQRNKYFKTYNERKMMETLSWKDKVAKGYFNSWAEEHTVYHPGQNSLLEGTASSLEYQSWQVLEGKKLPKVKCSPFCDGEILKTLNEAIEKSLGEALSVDAKVSSKQQYRCCPVFSEESVLSELLRLTKCLPDEQGAEPSGPVKCLLVGSPAVCDLQMPAPLEIQLVESVELTAFSCSLLHDGDPAYQHLFLDCLLHSLRRLHRGDVMVLPILSCFTRFMAGLTFVLHGCFRFITFSCPTSLEPLRTCAVLLCIGYQNLPDAVFQFLQNVHDLLSKLLHPSAPRQILQFLPMEALLQGTLLDFLWDLNAAIAKRHLHLIIQGERDQAIGSLEL.

The Adrift-type SAM-dependent 2'-O-MTase domain occupies 109–322; the sequence is ELCTQAWCKF…VYVVCLRYKG (214 aa). Lys-117 is a catalytic residue. Positions 148, 167, and 235 each coordinate S-adenosyl-L-methionine. Residue Asp-235 is part of the active site. The active-site Proton acceptor is the Lys-275.

It is found in the nucleus. The protein resides in the cytoplasm. The enzyme catalyses a 5'-end (N(7)-methyl 5'-triphosphoguanosine)-(2'-O-methyl-ribonucleoside)-(ribonucleotide) in mRNA + S-adenosyl-L-methionine = a 5'-end (N(7)-methyl 5'-triphosphoguanosine)-(2'-O-methyl-ribonucleoside)-(2'-O-methyl-ribonucleotide) in mRNA + S-adenosyl-L-homocysteine + H(+). In terms of biological role, S-adenosyl-L-methionine-dependent methyltransferase that mediates mRNA cap2 2'-O-ribose methylation to the 5'-cap structure of mRNAs. Methylates the ribose of the second nucleotide of a m(7)GpppG-capped mRNA and small nuclear RNA (snRNA) (cap0) to produce m(7)GpppRmpNm (cap2). Recognizes a guanosine cap on RNA independently of its N(7) methylation status. Display cap2 methylation on both cap0 and cap1. Displays a preference for cap1 RNAs. The sequence is that of Cap-specific mRNA (nucleoside-2'-O-)-methyltransferase 2 (Cmtr2) from Mus musculus (Mouse).